A 442-amino-acid polypeptide reads, in one-letter code: Probable D-serine dehydratase (442 aa).

Lysine 115 carries the N6-(pyridoxal phosphate)lysine modification.

This sequence belongs to the serine/threonine dehydratase family. DsdA subfamily. Requires pyridoxal 5'-phosphate as cofactor.

It catalyses the reaction D-serine = pyruvate + NH4(+). The sequence is that of Probable D-serine dehydratase from Halalkalibacterium halodurans (strain ATCC BAA-125 / DSM 18197 / FERM 7344 / JCM 9153 / C-125) (Bacillus halodurans).